Reading from the N-terminus, the 149-residue chain is Myoglobin (149 aa).

N-acetylvaline is present on Val-2. Residues 2–143 (VDWEKVNSVW…ICSDIEKEYK (142 aa)) enclose the Globin domain. His-89 is a heme b binding site.

Belongs to the globin family. As to quaternary structure, monomeric.

The protein localises to the cytoplasm. The protein resides in the sarcoplasm. The catalysed reaction is Fe(III)-heme b-[protein] + nitric oxide + H2O = Fe(II)-heme b-[protein] + nitrite + 2 H(+). The enzyme catalyses H2O2 + AH2 = A + 2 H2O. In terms of biological role, monomeric heme protein which primary function is to store oxygen and facilitate its diffusion within muscle tissues. Reversibly binds oxygen through a pentacoordinated heme iron and enables its timely and efficient release as needed during periods of heightened demand. Depending on the oxidative conditions of tissues and cells, and in addition to its ability to bind oxygen, it also has a nitrite reductase activity whereby it regulates the production of bioactive nitric oxide. Under stress conditions, like hypoxia and anoxia, it also protects cells against reactive oxygen species thanks to its pseudoperoxidase activity. The protein is Myoglobin (mb) of Mustelus antarcticus (Gummy shark).